The sequence spans 359 residues: 3-isopropylmalate dehydrogenase (359 aa).

77–88 is a binding site for NAD(+); that stretch reads GPKWGTGDVRPE. Substrate-binding residues include Arg-95, Arg-105, Arg-134, and Asp-223. Mg(2+)-binding residues include Asp-223, Asp-248, and Asp-252. 287–298 contacts NAD(+); the sequence is GSAPDLPAGKVN.

Belongs to the isocitrate and isopropylmalate dehydrogenases family. In terms of assembly, homodimer. It depends on Mg(2+) as a cofactor. Mn(2+) is required as a cofactor.

It is found in the cytoplasm. The catalysed reaction is (2R,3S)-3-isopropylmalate + NAD(+) = 4-methyl-2-oxopentanoate + CO2 + NADH. Its pathway is amino-acid biosynthesis; L-leucine biosynthesis; L-leucine from 3-methyl-2-oxobutanoate: step 3/4. Functionally, catalyzes the oxidation of 3-carboxy-2-hydroxy-4-methylpentanoate (3-isopropylmalate) to 3-carboxy-4-methyl-2-oxopentanoate. The product decarboxylates to 4-methyl-2 oxopentanoate. In Diutina rugosa (Yeast), this protein is 3-isopropylmalate dehydrogenase (LEU2).